The primary structure comprises 260 residues: Adenosylcobinamide-GDP ribazoletransferase (260 aa).

8 consecutive transmembrane segments (helical) span residues 3–23 (APLW…LPAW), 36–56 (FAPW…LVLI), 60–80 (WPTS…SGGL), 108–128 (VGAS…AALL), 133–153 (LAPL…LWAM), 180–200 (ALPA…LMIV), 206–226 (MVLM…PELL), and 239–259 (GASV…LLTA).

This sequence belongs to the CobS family. Mg(2+) is required as a cofactor.

It localises to the cell inner membrane. The enzyme catalyses alpha-ribazole + adenosylcob(III)inamide-GDP = adenosylcob(III)alamin + GMP + H(+). It catalyses the reaction alpha-ribazole 5'-phosphate + adenosylcob(III)inamide-GDP = adenosylcob(III)alamin 5'-phosphate + GMP + H(+). Its pathway is cofactor biosynthesis; adenosylcobalamin biosynthesis; adenosylcobalamin from cob(II)yrinate a,c-diamide: step 7/7. Its function is as follows. Joins adenosylcobinamide-GDP and alpha-ribazole to generate adenosylcobalamin (Ado-cobalamin). Also synthesizes adenosylcobalamin 5'-phosphate from adenosylcobinamide-GDP and alpha-ribazole 5'-phosphate. The polypeptide is Adenosylcobinamide-GDP ribazoletransferase (Prochlorococcus marinus (strain MIT 9303)).